Here is a 201-residue protein sequence, read N- to C-terminus: Large ribosomal subunit protein uL4 (201 aa).

The disordered stretch occupies residues 45–71 (AQKTRAEVTGSGKKPWRQKGTGRARAG).

The protein belongs to the universal ribosomal protein uL4 family. Part of the 50S ribosomal subunit.

Its function is as follows. One of the primary rRNA binding proteins, this protein initially binds near the 5'-end of the 23S rRNA. It is important during the early stages of 50S assembly. It makes multiple contacts with different domains of the 23S rRNA in the assembled 50S subunit and ribosome. In terms of biological role, forms part of the polypeptide exit tunnel. The sequence is that of Large ribosomal subunit protein uL4 from Shewanella oneidensis (strain ATCC 700550 / JCM 31522 / CIP 106686 / LMG 19005 / NCIMB 14063 / MR-1).